The following is a 135-amino-acid chain: Large ribosomal subunit protein uL16c (135 aa).

The protein belongs to the universal ribosomal protein uL16 family. In terms of assembly, part of the 50S ribosomal subunit.

The protein localises to the plastid. Its subcellular location is the chloroplast. In Lactuca sativa (Garden lettuce), this protein is Large ribosomal subunit protein uL16c.